A 369-amino-acid chain; its full sequence is Phospho-N-acetylmuramoyl-pentapeptide-transferase (369 aa).

10 helical membrane passes run 3–23, 53–73, 81–101, 118–138, 162–182, 198–218, 240–260, 267–287, 290–310, and 347–367; these read ALLF…PLFI, GGIV…LLTW, VTPS…VGFL, WQKI…AITL, FMAL…CLIV, LAAG…FWQF, PLDL…FLWW, IFMG…LAIL, TELL…SVVL, and FWII…LEWI.

Belongs to the glycosyltransferase 4 family. MraY subfamily. The cofactor is Mg(2+).

The protein localises to the cell membrane. It carries out the reaction UDP-N-acetyl-alpha-D-muramoyl-L-alanyl-gamma-D-glutamyl-meso-2,6-diaminopimeloyl-D-alanyl-D-alanine + di-trans,octa-cis-undecaprenyl phosphate = di-trans,octa-cis-undecaprenyl diphospho-N-acetyl-alpha-D-muramoyl-L-alanyl-D-glutamyl-meso-2,6-diaminopimeloyl-D-alanyl-D-alanine + UMP. Its pathway is cell wall biogenesis; peptidoglycan biosynthesis. In terms of biological role, catalyzes the initial step of the lipid cycle reactions in the biosynthesis of the cell wall peptidoglycan: transfers peptidoglycan precursor phospho-MurNAc-pentapeptide from UDP-MurNAc-pentapeptide onto the lipid carrier undecaprenyl phosphate, yielding undecaprenyl-pyrophosphoryl-MurNAc-pentapeptide, known as lipid I. The polypeptide is Phospho-N-acetylmuramoyl-pentapeptide-transferase (Clavibacter michiganensis subsp. michiganensis (strain NCPPB 382)).